Reading from the N-terminus, the 335-residue chain is Protein STRICTOSIDINE SYNTHASE-LIKE 12 (335 aa).

The N-terminal stretch at 1–22 (MTSFCSMISLLLLLSLSSAVFS) is a signal peptide. An N-linked (GlcNAc...) asparagine glycan is attached at Asn80.

Belongs to the strictosidine synthase family.

Its subcellular location is the vacuole. It carries out the reaction 3alpha(S)-strictosidine + H2O = secologanin + tryptamine. Its pathway is alkaloid biosynthesis; 3alpha(S)-strictosidine biosynthesis; 3alpha(S)-strictosidine from secologanin and tryptamine: step 1/1. Functionally, catalyzes the stereospecific condensation of tryptamine with secologanin to form strictosidine, the key intermediate of indole alkaloid biosynthesis. The chain is Protein STRICTOSIDINE SYNTHASE-LIKE 12 from Arabidopsis thaliana (Mouse-ear cress).